The primary structure comprises 269 residues: Eukaryotic translation initiation factor 3 subunit G-1 (269 aa).

Positions 188–266 (AAIRISNLSE…LILSVEWSKP (79 aa)) constitute an RRM domain.

The protein belongs to the eIF-3 subunit G family. Component of the eukaryotic translation initiation factor 3 (eIF-3) complex. The eIF-3 complex interacts with pix.

The protein resides in the cytoplasm. RNA-binding component of the eukaryotic translation initiation factor 3 (eIF-3) complex, which is involved in protein synthesis of a specialized repertoire of mRNAs and, together with other initiation factors, stimulates binding of mRNA and methionyl-tRNAi to the 40S ribosome. The eIF-3 complex specifically targets and initiates translation of a subset of mRNAs involved in cell proliferation. This subunit can bind 18S rRNA. The sequence is that of Eukaryotic translation initiation factor 3 subunit G-1 from Drosophila grimshawi (Hawaiian fruit fly).